A 590-amino-acid polypeptide reads, in one-letter code: Acetylcholinesterase (590 aa).

Positions 1-24 are cleaved as a signal peptide; sequence MREMNLLVTSSLGVLLHLVVLCQA. N83 carries an N-linked (GlcNAc...) asparagine glycan. A disulfide bridge connects residues C91 and C118. The Acyl-ester intermediate role is filled by S224. A disulfide bridge connects residues C278 and C289. Residue E351 is the Charge relay system of the active site. The cysteines at positions 426 and 545 are disulfide-linked. Residue N440 is glycosylated (N-linked (GlcNAc...) asparagine). The active-site Charge relay system is H464. 2 N-linked (GlcNAc...) asparagine glycosylation sites follow: N481 and N557. S567 carries GPI-anchor amidated serine lipidation. A propeptide spans 568 to 590 (removed in mature form); sequence SGTSSSKGIIFYVLFSILYLIFY.

Belongs to the type-B carboxylesterase/lipase family. As to quaternary structure, isoform H form is a homodimer; the asymmetric form is a disulfide-bonded oligomer composed of a collagenic subunit (Q) and a variable number of T catalytic subunits. An interchain disulfide bond is present in what becomes position 596 of the T isoform. As to expression, found in the synapses and to a lower extent in extrajunctional areas of muscle and nerve, and on erythrocyte membranes.

Its subcellular location is the cell membrane. The protein localises to the synapse. The enzyme catalyses acetylcholine + H2O = choline + acetate + H(+). Its function is as follows. Terminates signal transduction at the neuromuscular junction by rapid hydrolysis of the acetylcholine released into the synaptic cleft. May be involved in cell-cell interactions. In Torpedo marmorata (Marbled electric ray), this protein is Acetylcholinesterase (ache).